We begin with the raw amino-acid sequence, 656 residues long: tRNA 5-methylaminomethyl-2-thiouridine biosynthesis bifunctional protein MnmC (656 aa).

The tract at residues 1-236 is tRNA (mnm(5)s(2)U34)-methyltransferase; it reads MTDPLIPAVL…KRAMLVGHFA (236 aa). Positions 260–656 are FAD-dependent cmnm(5)s(2)U34 oxidoreductase; the sequence is IGAGLAGCAV…LRALRQGAVS (397 aa).

The protein in the N-terminal section; belongs to the methyltransferase superfamily. tRNA (mnm(5)s(2)U34)-methyltransferase family. In the C-terminal section; belongs to the DAO family. Requires FAD as cofactor.

It localises to the cytoplasm. It catalyses the reaction 5-aminomethyl-2-thiouridine(34) in tRNA + S-adenosyl-L-methionine = 5-methylaminomethyl-2-thiouridine(34) in tRNA + S-adenosyl-L-homocysteine + H(+). Catalyzes the last two steps in the biosynthesis of 5-methylaminomethyl-2-thiouridine (mnm(5)s(2)U) at the wobble position (U34) in tRNA. Catalyzes the FAD-dependent demodification of cmnm(5)s(2)U34 to nm(5)s(2)U34, followed by the transfer of a methyl group from S-adenosyl-L-methionine to nm(5)s(2)U34, to form mnm(5)s(2)U34. This chain is tRNA 5-methylaminomethyl-2-thiouridine biosynthesis bifunctional protein MnmC, found in Paraburkholderia phytofirmans (strain DSM 17436 / LMG 22146 / PsJN) (Burkholderia phytofirmans).